A 145-amino-acid chain; its full sequence is Large ribosomal subunit protein uL13 (145 aa).

Belongs to the universal ribosomal protein uL13 family. Part of the 50S ribosomal subunit.

In terms of biological role, this protein is one of the early assembly proteins of the 50S ribosomal subunit, although it is not seen to bind rRNA by itself. It is important during the early stages of 50S assembly. The chain is Large ribosomal subunit protein uL13 from Staphylococcus haemolyticus (strain JCSC1435).